Consider the following 406-residue polypeptide: 2,3-diketo-5-methylthiopentyl-1-phosphate enolase (406 aa).

Lysine 94 functions as the Proton acceptor in the catalytic mechanism. Substrate contacts are provided by residues lysine 143, 169–172 (KDDE), histidine 260, glycine 332, and 354–355 (GG). Lysine 169, aspartate 171, and glutamate 172 together coordinate Mg(2+). Position 169 is an N6-carboxylysine (lysine 169).

This sequence belongs to the RuBisCO large chain family. Type IV subfamily. Homodimer. The cofactor is Mg(2+).

The catalysed reaction is 5-methylsulfanyl-2,3-dioxopentyl phosphate = 2-hydroxy-5-methylsulfanyl-3-oxopent-1-enyl phosphate. The protein operates within amino-acid biosynthesis; L-methionine biosynthesis via salvage pathway; L-methionine from S-methyl-5-thio-alpha-D-ribose 1-phosphate: step 3/6. In terms of biological role, catalyzes the enolization of 2,3-diketo-5-methylthiopentyl-1-phosphate (DK-MTP-1-P) into 2-hydroxy-3-keto-5-methylthiopentenyl-1-phosphate (HK-MTPenyl-1-P). This Bacillus pumilus (strain SAFR-032) protein is 2,3-diketo-5-methylthiopentyl-1-phosphate enolase.